Reading from the N-terminus, the 132-residue chain is Small ribosomal subunit protein uS8 (132 aa).

It belongs to the universal ribosomal protein uS8 family. As to quaternary structure, part of the 30S ribosomal subunit. Contacts proteins S5 and S12.

Its function is as follows. One of the primary rRNA binding proteins, it binds directly to 16S rRNA central domain where it helps coordinate assembly of the platform of the 30S subunit. The polypeptide is Small ribosomal subunit protein uS8 (Shouchella clausii (strain KSM-K16) (Alkalihalobacillus clausii)).